The sequence spans 277 residues: Leucine-rich repeat-containing protein 10 (277 aa).

LRR repeat units lie at residues 53–74 (ELVK…LGQL), 76–97 (NLQI…VCTL), 99–120 (QLCI…LSLL), 122–143 (NLRT…VCEL), 145–167 (LLKT…RRLQ), 168–189 (ELRT…LLHM), and 191–212 (FLEV…AHLS).

The protein localises to the nucleus. Its function is as follows. May play important roles in cardiac development and/or cardiac function. This Homo sapiens (Human) protein is Leucine-rich repeat-containing protein 10 (LRRC10).